We begin with the raw amino-acid sequence, 506 residues long: (+)-piperitol/(+)-sesamin synthase CYP81Q2 (506 aa).

The chain crosses the membrane as a helical span at residues 3–23 (AEMLYSALALTFAIFMVYRIL). Cys439 contacts heme.

This sequence belongs to the cytochrome P450 family. Requires heme as cofactor. As to expression, expressed in seeds.

The protein localises to the membrane. The enzyme catalyses (+)-piperitol + reduced [NADPH--hemoprotein reductase] + O2 = (+)-sesamin + oxidized [NADPH--hemoprotein reductase] + 2 H2O + H(+). The catalysed reaction is (+)-pinoresinol + reduced [NADPH--hemoprotein reductase] + O2 = (+)-piperitol + oxidized [NADPH--hemoprotein reductase] + 2 H2O + H(+). Involved in the biosynthesis of (+)-sesamin, a furofuran class lignan. Functions in a dual catalytic mode. Catalyzes the synthesis of (+)-sesamin from (+)- pinoresinol by formation of two successive methylenedioxy bridges on (+)-pinoresinol and (+)-piperitol, respectively. The polypeptide is (+)-piperitol/(+)-sesamin synthase CYP81Q2 (Sesamum radiatum (Black benniseed)).